The primary structure comprises 334 residues: Protein-glutamate methylesterase/protein-glutamine glutaminase 1 (334 aa).

The 119-residue stretch at 2–120 (NIGIVNDLPL…GAAGDTTKLL (119 aa)) folds into the Response regulatory domain. Asp53 bears the 4-aspartylphosphate mark. Residues 145-334 (RAGGGPLIAI…AGELAALARI (190 aa)) form the CheB-type methylesterase domain. Residues Ser157, His184, and Asp277 contribute to the active site.

The protein belongs to the CheB family. Post-translationally, phosphorylated by CheA. Phosphorylation of the N-terminal regulatory domain activates the methylesterase activity.

It is found in the cytoplasm. It catalyses the reaction [protein]-L-glutamate 5-O-methyl ester + H2O = L-glutamyl-[protein] + methanol + H(+). The enzyme catalyses L-glutaminyl-[protein] + H2O = L-glutamyl-[protein] + NH4(+). Its function is as follows. Involved in chemotaxis. Part of a chemotaxis signal transduction system that modulates chemotaxis in response to various stimuli. Catalyzes the demethylation of specific methylglutamate residues introduced into the chemoreceptors (methyl-accepting chemotaxis proteins or MCP) by CheR. Also mediates the irreversible deamidation of specific glutamine residues to glutamic acid. In Burkholderia lata (strain ATCC 17760 / DSM 23089 / LMG 22485 / NCIMB 9086 / R18194 / 383), this protein is Protein-glutamate methylesterase/protein-glutamine glutaminase 1.